The chain runs to 481 residues: MEMVLPVANATAAALARVSAMFNAPLARAVVFGIHIDGHLVVEGLLIAAILFQLSRKSYKPPKKPLTEREVDELCDEWQPEPLCPPIKEGARIEAPTLESAAGPHTIVDGKEVVNFASANYLGLIGNEKILDSCIGSVEKYGVGSCGPRGFYGTIDVHLDCETKIAKFLGTQDSILYSYGISTIFSVIPAFCKKGDIIVADEGVHWAVQNGLQLSRSTVVYFKHNDMASLASTLEKLTHGNKRTEKIRRYIVVEAIYQNSGQIAPLDEIVRLKEKYRFRVILEESHSFGVLGKSGRGLAEHYGVPIEKIDIITAGMGNALATDGGFCTGSIRVVDHQRLSSSGYVFSASLPPYLASAAISAVDHLEENPSVLANLRSNITLLHKELSDVQGLEIASNILSPIVFLKLKTSTGSAVADLELLEVISEKVLKEDSVFIAATKRSSLDKCRLPVGIRLFVSAGHTESDILKVSESLKRVAASVL.

Residues 32-52 (FGIHIDGHLVVEGLLIAAILF) form a helical membrane-spanning segment.

The protein belongs to the class-II pyridoxal-phosphate-dependent aminotransferase family. As to quaternary structure, heterodimer with LCB2. Component of the serine palmitoyltransferase (SPT) complex, composed of LCB1 and LCB2. Pyridoxal 5'-phosphate is required as a cofactor.

The protein localises to the endoplasmic reticulum membrane. The catalysed reaction is L-serine + hexadecanoyl-CoA + H(+) = 3-oxosphinganine + CO2 + CoA. It participates in lipid metabolism; sphingolipid metabolism. Functionally, serine palmitoyltransferase (SPT). The heterodimer formed with LCB2 constitutes the catalytic core. In Oryza sativa subsp. japonica (Rice), this protein is Long chain base biosynthesis protein 1b.